The primary structure comprises 219 residues: Ribose-5-phosphate isomerase A (219 aa).

Substrate is bound by residues 28 to 31 (TGST), 81 to 84 (DGAD), and 94 to 97 (KGGG). The active-site Proton acceptor is E103. K121 is a substrate binding site.

This sequence belongs to the ribose 5-phosphate isomerase family. As to quaternary structure, homodimer.

The enzyme catalyses aldehydo-D-ribose 5-phosphate = D-ribulose 5-phosphate. Its pathway is carbohydrate degradation; pentose phosphate pathway; D-ribose 5-phosphate from D-ribulose 5-phosphate (non-oxidative stage): step 1/1. Catalyzes the reversible conversion of ribose-5-phosphate to ribulose 5-phosphate. In Pectobacterium atrosepticum (strain SCRI 1043 / ATCC BAA-672) (Erwinia carotovora subsp. atroseptica), this protein is Ribose-5-phosphate isomerase A.